A 445-amino-acid polypeptide reads, in one-letter code: Argininosuccinate synthase (445 aa).

Residues 17 to 25 and A43 each bind ATP; that span reads AFSGGLDTS. L-citrulline is bound at residue Y99. Residues G129 and T131 each coordinate ATP. Residues T131, N135, and D136 each coordinate L-aspartate. N135 serves as a coordination point for L-citrulline. D136 provides a ligand contact to ATP. The L-citrulline site is built by R139 and S192. D194 contacts ATP. Residues T201, E203, and E280 each coordinate L-citrulline.

This sequence belongs to the argininosuccinate synthase family. Type 2 subfamily. As to quaternary structure, homotetramer.

The protein localises to the cytoplasm. It carries out the reaction L-citrulline + L-aspartate + ATP = 2-(N(omega)-L-arginino)succinate + AMP + diphosphate + H(+). It functions in the pathway amino-acid biosynthesis; L-arginine biosynthesis; L-arginine from L-ornithine and carbamoyl phosphate: step 2/3. The polypeptide is Argininosuccinate synthase (Gemmatimonas aurantiaca (strain DSM 14586 / JCM 11422 / NBRC 100505 / T-27)).